The sequence spans 81 residues: MKYPLVPLVNELTFSFLASWLCLPVGLLLFLLIVWLRFLLSQDSEENDSDLCFDWEPWSKGPAEFCQEETLHSPEEERPCW.

Residues 16 to 36 (FLASWLCLPVGLLLFLLIVWL) form a helical membrane-spanning segment.

It belongs to the adipogenin family.

It is found in the membrane. Its subcellular location is the nucleus. In terms of biological role, plays a role in stimulating adipocyte differentiation and development. The chain is Adipogenin from Sus scrofa (Pig).